Here is a 600-residue protein sequence, read N- to C-terminus: MDKKKYIRNFSIVAHIDHGKSTLADRLLEKTGTLTQREMEQQVLDTMELEKERGITIKSQAARLIYKRENGEEYILNLIDTPGHVDFTYEVSRSLAACEGAILVVDATQGIQAQTLANCYLALDNDLEIVPVINKVDLASARPDEIKQEIEDVIGIEAEDAPLVSAKTGLNIEDVLEEIVEKVPAPEGDENAPLKALIFDSYYDSYKGVVCHIRVKDGKVKPGTKIKLMSTDKVYEVVETGVFTPALMPLKEGLSAGEVGYITASIKNVRDARVGDTVTEAARPTEEALPGYKPAIPMVYSGIYPVDGAKYEELKEALEKLQINDAALSFEPETSVALGFGFRCGFLGLLHMEIIQERVEREFNLDIITTAPSVIYKVTKTNGESFDLTNPTNLPPMTEIAYMEEPVVKASIITPTDYTGAVMELCQDRRGKFIDMQYLEETRVVIHYEIPLNEIVYDFFDTLKSKTRGYASLDYELKGYEQSKLVKLDILLNGDNVDALSMIVPEVKAYQRGRAIAEKLKEIIPRHMFEVPIQAAVGSKIIARETVKAMRKDVLAKCYGGDISRKKKLLEKQKEGKKRMRQLGTVEVPQEAFMSVLKVD.

Residues 5–187 (KYIRNFSIVA…EIVEKVPAPE (183 aa)) form the tr-type G domain. GTP-binding positions include 17–22 (DHGKST) and 134–137 (NKVD).

It belongs to the TRAFAC class translation factor GTPase superfamily. Classic translation factor GTPase family. LepA subfamily.

It is found in the cell membrane. It carries out the reaction GTP + H2O = GDP + phosphate + H(+). Required for accurate and efficient protein synthesis under certain stress conditions. May act as a fidelity factor of the translation reaction, by catalyzing a one-codon backward translocation of tRNAs on improperly translocated ribosomes. Back-translocation proceeds from a post-translocation (POST) complex to a pre-translocation (PRE) complex, thus giving elongation factor G a second chance to translocate the tRNAs correctly. Binds to ribosomes in a GTP-dependent manner. The protein is Elongation factor 4 of Clostridium perfringens (strain ATCC 13124 / DSM 756 / JCM 1290 / NCIMB 6125 / NCTC 8237 / Type A).